The following is a 332-amino-acid chain: 2,3-bisphosphoglycerate-dependent phosphoglycerate mutase 2 (332 aa).

A chloroplast-targeting transit peptide spans 1 to 48 (MATSTTMSHQAIGSVVSQRPFKASQFLKEPLNNVPMKFRQKRFKIEAT). Substrate contacts are provided by residues 85 to 92 (RHGESLWN), 98 to 99 (TG), R135, 189 to 192 (ERMY), K200, 216 to 217 (RR), and 260 to 261 (GN). The Tele-phosphohistidine intermediate role is filled by H86. Residue E189 is the Proton donor/acceptor of the active site.

This sequence belongs to the phosphoglycerate mutase family. BPG-dependent PGAM subfamily.

The protein resides in the plastid. The protein localises to the chloroplast. The enzyme catalyses (2R)-2-phosphoglycerate = (2R)-3-phosphoglycerate. Its pathway is carbohydrate degradation; glycolysis; pyruvate from D-glyceraldehyde 3-phosphate: step 3/5. Functionally, catalyzes the interconversion of 2-phosphoglycerate and 3-phosphoglycerate. The protein is 2,3-bisphosphoglycerate-dependent phosphoglycerate mutase 2 of Arabidopsis thaliana (Mouse-ear cress).